We begin with the raw amino-acid sequence, 221 residues long: GTPase Obg (221 aa).

The region spanning 1-61 is the OBG-type G domain; it reads PSALRLVLLN…LKYKLLEIVQ (61 aa). GTP is bound by residues 10–13 and 42–44; these read NKAD and SAV. Residues 82 to 162 form the OCT domain; that stretch reads VVHRTKGQFQ…IGGISFEWEP (81 aa).

Belongs to the TRAFAC class OBG-HflX-like GTPase superfamily. OBG GTPase family. Monomer. Mg(2+) is required as a cofactor.

The protein localises to the cytoplasm. In terms of biological role, an essential GTPase which binds GTP, GDP and possibly (p)ppGpp with moderate affinity, with high nucleotide exchange rates and a fairly low GTP hydrolysis rate. Plays a role in control of the cell cycle, stress response, ribosome biogenesis and in those bacteria that undergo differentiation, in morphogenesis control. This is GTPase Obg from Corynebacterium melassecola.